Here is a 229-residue protein sequence, read N- to C-terminus: Glutamine amidotransferase-like class 1 domain-containing protein 1 (229 aa).

The N-terminal stretch at 1–34 (MKKQGAPVSGGGTERLTKPSCLMVGSAVAEGVSA) is a signal peptide. N-linked (GlcNAc...) asparagine glycosylation is found at Asn154 and Asn212.

It belongs to the peptidase C56 family. Homotetramer. Component of the FERRY complex.

It localises to the secreted. It is found in the early endosome. Component of the FERRY complex (Five-subunit Endosomal Rab5 and RNA/ribosome intermediary). The FERRY complex directly interacts with mRNAs and RAB5A, and functions as a RAB5A effector involved in the localization and the distribution of specific mRNAs most likely by mediating their endosomal transport. The complex recruits mRNAs and ribosomes to early endosomes through direct mRNA-interaction. This is Glutamine amidotransferase-like class 1 domain-containing protein 1 from Xenopus laevis (African clawed frog).